Here is a 1648-residue protein sequence, read N- to C-terminus: Histone transcription regulator 3 (1648 aa).

2 disordered regions span residues 301–371 (NTPS…EQEN) and 1597–1630 (DVND…IKKR). Position 302 is a phosphothreonine (Thr-302). Position 304 is a phosphoserine (Ser-304). The span at 339 to 353 (EEARPNKRTDEHIDS) shows a compositional bias: basic and acidic residues. Polar residues predominate over residues 1597–1610 (DVNDENNPALPSSG). The segment covering 1611 to 1625 (SVTSKSTPDPTSKPS) has biased composition (low complexity).

This sequence belongs to the HIR3 family. In terms of assembly, component of the HIR complex, composed of HIR1, HIR2, HIR3 and HPC2. This complex may consist of one copy of HIR1 and HIR3 and two copies of HIR2 and HPC2. The HIR complex interacts with ASF1. Interacts with RTT106.

It is found in the nucleus. The protein localises to the chromosome. Its function is as follows. HIR1, HIR2 and HIR3 are repressors of histone gene transcription. They are required for the periodic repression of three of the four histone gene loci during cell cycle as well as for autogenous regulation of the HTA1-HTB1 locus by H2A and H2B. Also has a role in nucleosome assembly. The chain is Histone transcription regulator 3 (HIR3) from Saccharomyces cerevisiae (strain ATCC 204508 / S288c) (Baker's yeast).